A 204-amino-acid chain; its full sequence is Somatotropin (204 aa).

Residues 1–17 (MNSVVLQLSVVCLGVSS) form the signal peptide. Gln18 carries the post-translational modification Pyrrolidone carboxylic acid. A Zn(2+)-binding site is contributed by His36. A disulfide bridge links Cys69 with Cys177. Glu186 lines the Zn(2+) pocket. Cys194 and Cys202 are joined by a disulfide.

Belongs to the somatotropin/prolactin family.

The protein resides in the secreted. Its function is as follows. Growth hormone plays an important role in growth control and involved in the regulation of several anabolic processes. The protein is Somatotropin (gh) of Oreochromis mossambicus (Mozambique tilapia).